Consider the following 249-residue polypeptide: 5'-nucleotidase SurE (249 aa).

4 residues coordinate a divalent metal cation: D9, D10, S40, and N92.

It belongs to the SurE nucleotidase family. The cofactor is a divalent metal cation.

The protein resides in the cytoplasm. The enzyme catalyses a ribonucleoside 5'-phosphate + H2O = a ribonucleoside + phosphate. Functionally, nucleotidase that shows phosphatase activity on nucleoside 5'-monophosphates. This is 5'-nucleotidase SurE from Shewanella oneidensis (strain ATCC 700550 / JCM 31522 / CIP 106686 / LMG 19005 / NCIMB 14063 / MR-1).